Here is a 273-residue protein sequence, read N- to C-terminus: Phosphatidylglycerol--prolipoprotein diacylglyceryl transferase (273 aa).

A run of 7 helical transmembrane segments spans residues 21–41 (VSIR…LWLA), 60–80 (LLFA…VIFY), 95–115 (VWTG…AMFW), 124–144 (FFGV…MGRM), 176–196 (SQLY…NWFI), 203–223 (GSVS…VEFV), and 237–257 (ISMG…MMVW). Arginine 143 provides a ligand contact to a 1,2-diacyl-sn-glycero-3-phospho-(1'-sn-glycerol).

Belongs to the Lgt family.

The protein resides in the cell inner membrane. It carries out the reaction L-cysteinyl-[prolipoprotein] + a 1,2-diacyl-sn-glycero-3-phospho-(1'-sn-glycerol) = an S-1,2-diacyl-sn-glyceryl-L-cysteinyl-[prolipoprotein] + sn-glycerol 1-phosphate + H(+). It participates in protein modification; lipoprotein biosynthesis (diacylglyceryl transfer). Its function is as follows. Catalyzes the transfer of the diacylglyceryl group from phosphatidylglycerol to the sulfhydryl group of the N-terminal cysteine of a prolipoprotein, the first step in the formation of mature lipoproteins. The sequence is that of Phosphatidylglycerol--prolipoprotein diacylglyceryl transferase from Vibrio parahaemolyticus serotype O3:K6 (strain RIMD 2210633).